We begin with the raw amino-acid sequence, 879 residues long: Alanine--tRNA ligase (879 aa).

Residues histidine 566, histidine 570, cysteine 668, and histidine 672 each coordinate Zn(2+).

Belongs to the class-II aminoacyl-tRNA synthetase family. The cofactor is Zn(2+).

Its subcellular location is the cytoplasm. It carries out the reaction tRNA(Ala) + L-alanine + ATP = L-alanyl-tRNA(Ala) + AMP + diphosphate. In terms of biological role, catalyzes the attachment of alanine to tRNA(Ala) in a two-step reaction: alanine is first activated by ATP to form Ala-AMP and then transferred to the acceptor end of tRNA(Ala). Also edits incorrectly charged Ser-tRNA(Ala) and Gly-tRNA(Ala) via its editing domain. The protein is Alanine--tRNA ligase of Clostridium kluyveri (strain ATCC 8527 / DSM 555 / NBRC 12016 / NCIMB 10680 / K1).